Consider the following 101-residue polypeptide: uncharacterized protein (101 aa).

The next 2 helical transmembrane spans lie at 52–72 and 75–95; these read VVFIIVFLTGWAAKSIIVKLL and LWRLSTLIPSFFASFFMSLLG.

Its subcellular location is the endoplasmic reticulum membrane. This is an uncharacterized protein from Schizosaccharomyces pombe (strain 972 / ATCC 24843) (Fission yeast).